The following is a 54-amino-acid chain: Potassium channel toxin alpha-KTx 14.2 (54 aa).

Residues 1–23 (MKIFFAILLILAVCSMAIWTVNG) form the signal peptide. 3 disulfides stabilise this stretch: Cys30–Cys46, Cys36–Cys51, and Cys40–Cys53.

Belongs to the short scorpion toxin superfamily. Potassium channel inhibitor family. Alpha-KTx 14 subfamily. In terms of tissue distribution, expressed by the venom gland.

The protein resides in the secreted. Functionally, inhibits potassium channels. May be active towards small conductance calcium-activated potassium channels (KCNN, SK), and less active towards voltage-gated potassium channels (Kv/KCN). The sequence is that of Potassium channel toxin alpha-KTx 14.2 from Olivierus martensii (Manchurian scorpion).